The sequence spans 270 residues: Shikimate dehydrogenase (NADP(+)) (270 aa).

Residues 15–17 (SKS) and Thr62 contribute to the shikimate site. Residue Lys66 is the Proton acceptor of the active site. 2 residues coordinate shikimate: Asn87 and Asp102. NADP(+) is bound by residues 127-131 (GAGGA), 151-156 (NRTVAR), and Met214. Tyr216 contributes to the shikimate binding site. Gly238 is a binding site for NADP(+).

This sequence belongs to the shikimate dehydrogenase family. Homodimer.

It catalyses the reaction shikimate + NADP(+) = 3-dehydroshikimate + NADPH + H(+). It functions in the pathway metabolic intermediate biosynthesis; chorismate biosynthesis; chorismate from D-erythrose 4-phosphate and phosphoenolpyruvate: step 4/7. Involved in the biosynthesis of the chorismate, which leads to the biosynthesis of aromatic amino acids. Catalyzes the reversible NADPH linked reduction of 3-dehydroshikimate (DHSA) to yield shikimate (SA). In Alkalilimnicola ehrlichii (strain ATCC BAA-1101 / DSM 17681 / MLHE-1), this protein is Shikimate dehydrogenase (NADP(+)).